Consider the following 409-residue polypeptide: Tryptophan synthase beta chain (409 aa).

Lys-100 is subject to N6-(pyridoxal phosphate)lysine.

Belongs to the TrpB family. Tetramer of two alpha and two beta chains. Pyridoxal 5'-phosphate serves as cofactor.

It carries out the reaction (1S,2R)-1-C-(indol-3-yl)glycerol 3-phosphate + L-serine = D-glyceraldehyde 3-phosphate + L-tryptophan + H2O. The protein operates within amino-acid biosynthesis; L-tryptophan biosynthesis; L-tryptophan from chorismate: step 5/5. Functionally, the beta subunit is responsible for the synthesis of L-tryptophan from indole and L-serine. This is Tryptophan synthase beta chain from Pyrobaculum arsenaticum (strain DSM 13514 / JCM 11321 / PZ6).